The following is a 156-amino-acid chain: Small ribosomal subunit protein uS7 (156 aa).

Belongs to the universal ribosomal protein uS7 family. As to quaternary structure, part of the 30S ribosomal subunit. Contacts proteins S9 and S11.

In terms of biological role, one of the primary rRNA binding proteins, it binds directly to 16S rRNA where it nucleates assembly of the head domain of the 30S subunit. Is located at the subunit interface close to the decoding center, probably blocks exit of the E-site tRNA. The polypeptide is Small ribosomal subunit protein uS7 (Thermosynechococcus vestitus (strain NIES-2133 / IAM M-273 / BP-1)).